The following is a 328-amino-acid chain: tRNA dimethylallyltransferase (328 aa).

25–32 (GNTGSGKS) provides a ligand contact to ATP. 27–32 (TGSGKS) is a substrate binding site. The interval 50 to 53 (DSRQ) is interaction with substrate tRNA.

The protein belongs to the IPP transferase family. Monomer. Mg(2+) is required as a cofactor.

It carries out the reaction adenosine(37) in tRNA + dimethylallyl diphosphate = N(6)-dimethylallyladenosine(37) in tRNA + diphosphate. Functionally, catalyzes the transfer of a dimethylallyl group onto the adenine at position 37 in tRNAs that read codons beginning with uridine, leading to the formation of N6-(dimethylallyl)adenosine (i(6)A). The polypeptide is tRNA dimethylallyltransferase (Dehalococcoides mccartyi (strain ATCC BAA-2100 / JCM 16839 / KCTC 5957 / BAV1)).